We begin with the raw amino-acid sequence, 617 residues long: V-type proton ATPase catalytic subunit A (617 aa).

Position 136 is a phosphothreonine (Thr-136). 250–257 (GAFGCGKT) provides a ligand contact to ATP. Position 384 is a phosphoserine; by AMPK (Ser-384).

This sequence belongs to the ATPase alpha/beta chains family. As to quaternary structure, V-ATPase is a heteromultimeric enzyme made up of two complexes: the ATP-hydrolytic V1 complex and the proton translocation V0 complex. The V1 complex consists of three catalytic AB heterodimers that form a heterohexamer, three peripheral stalks each consisting of EG heterodimers, one central rotor including subunits D and F, and the regulatory subunits C and H. The proton translocation complex V0 consists of the proton transport subunit a, a ring of proteolipid subunits c9c'', rotary subunit d, subunits e and f, and the accessory subunits ATP6AP1/Ac45 and ATP6AP2/PRR. Interacts with the V0 complex V-ATPase subunit a4 ATP6V0A4. Interacts with WFS1. Interacts with alpha-crystallin B chain/CRYAB and with MTOR, forming a ternary complex. Post-translationally, phosphorylation at Ser-384 by AMPK down-regulates its enzyme activity. As to expression, expressed in brain (at protein level).

Its subcellular location is the cytoplasm. The protein localises to the cytosol. It localises to the cytoplasmic vesicle. The protein resides in the secretory vesicle. It is found in the clathrin-coated vesicle membrane. Its subcellular location is the lysosome. The catalysed reaction is ATP + H2O + 4 H(+)(in) = ADP + phosphate + 5 H(+)(out). ATP hydrolysis occurs at the interface between the nucleotide-binding domains of subunits A and B. ATP hydrolysis triggers a conformational change in the subunits D and F, which induces a shift of subunit d. The c-ring is subsequently rotated and results in a continuous proton translocation across the membrane. The V-ATPase is inhibited by bafilomycin A. In terms of biological role, catalytic subunit of the V1 complex of vacuolar(H+)-ATPase (V-ATPase), a multisubunit enzyme composed of a peripheral complex (V1) that hydrolyzes ATP and a membrane integral complex (V0) that translocates protons. V-ATPase is responsible for acidifying and maintaining the pH of intracellular compartments and in some cell types, is targeted to the plasma membrane, where it is responsible for acidifying the extracellular environment. In aerobic conditions, involved in intracellular iron homeostasis, thus triggering the activity of Fe(2+) prolyl hydroxylase (PHD) enzymes, and leading to HIF1A hydroxylation and subsequent proteasomal degradation. May play a role in neurite development and synaptic connectivity. In Bos taurus (Bovine), this protein is V-type proton ATPase catalytic subunit A (ATP6V1A).